The following is a 748-amino-acid chain: Semaphorin-3B (748 aa).

Residues Met1–Ala25 form the signal peptide. One can recognise a Sema domain in the interval Arg30–Leu512. Residue Asn82 is glycosylated (N-linked (GlcNAc...) asparagine). The cysteines at positions 102 and 113 are disulfide-linked. Asn124 is a glycosylation site (N-linked (GlcNAc...) asparagine). Cystine bridges form between Cys131-Cys140, Cys268-Cys379, Cys292-Cys339, Cys515-Cys533, and Cys643-Cys709. Positions Pro561–Leu659 constitute an Ig-like C2-type domain. A disordered region spans residues Met708 to Trp748. Residues His732–Pro742 show a composition bias toward basic and acidic residues.

It belongs to the semaphorin family.

It is found in the secreted. Inhibits axonal extension by providing local signals to specify territories inaccessible for growing axons. The protein is Semaphorin-3B (Sema3b) of Mus musculus (Mouse).